A 313-amino-acid chain; its full sequence is Ornithine carbamoyltransferase (313 aa).

Carbamoyl phosphate is bound by residues 57 to 60 (STRT), Gln-84, Arg-108, and 135 to 138 (HPTQ). L-ornithine-binding positions include Asn-167, Asp-231, and 235–236 (SM). Residues 272–273 (CL) and Arg-300 contribute to the carbamoyl phosphate site.

The protein belongs to the aspartate/ornithine carbamoyltransferase superfamily. OTCase family.

It localises to the cytoplasm. It carries out the reaction carbamoyl phosphate + L-ornithine = L-citrulline + phosphate + H(+). It functions in the pathway amino-acid biosynthesis; L-arginine biosynthesis; L-arginine from L-ornithine and carbamoyl phosphate: step 1/3. Reversibly catalyzes the transfer of the carbamoyl group from carbamoyl phosphate (CP) to the N(epsilon) atom of ornithine (ORN) to produce L-citrulline. The chain is Ornithine carbamoyltransferase from Caldanaerobacter subterraneus subsp. tengcongensis (strain DSM 15242 / JCM 11007 / NBRC 100824 / MB4) (Thermoanaerobacter tengcongensis).